Here is a 311-residue protein sequence, read N- to C-terminus: MAKELIFGHQNPDTDAIGTAIAYSYLQNKLGYDTEAVALGEANDETKYALNKFGFTAPRVIKTASNEVDAVMLVDHNEPQQSVSDIDKVKVTHVVDHHRIMNFNTADPLYYRAAPVGCTSTIMWQMYNEKEIEIPQDIAGIMLSAIISDTLLLKSPTTTDQDKEAVVSLANIAGVDYKEYGLKMLKAGTNIADKSEEDLIDLDAKSFELNGSNVRVAQINVVDLPEALERKDAFLKAMDEASKREGYDMFMLLITNILDSDSEALVVGSDESKAKFEKAFNAKLSDSEVKLPGVVSRKKQVVPPLTNAFEA.

Mn(2+) is bound by residues His9, Asp13, Asp15, Asp75, His97, and Asp149.

The protein belongs to the PPase class C family. Requires Mn(2+) as cofactor.

Its subcellular location is the cytoplasm. It carries out the reaction diphosphate + H2O = 2 phosphate + H(+). In Lactobacillus johnsonii (strain CNCM I-12250 / La1 / NCC 533), this protein is Probable manganese-dependent inorganic pyrophosphatase.